Consider the following 657-residue polypeptide: Chemoreceptor McpA (657 aa).

Residues 1 to 5 (MKRIR) lie on the Cytoplasmic side of the membrane. Residues 6–29 (LVDLPLIIKIGFAPAFALLMLAVM) form a helical membrane-spanning segment. Over 30-188 (AGGAILVQKS…ESESAKRQAQ (159 aa)) the chain is Periplasmic. Residues 189–212 (ATAAMSVTIIMSLLTLGAVGALAF) traverse the membrane as a helical segment. Residues 213–657 (LTVMTTRKSI…APASDGWEEF (445 aa)) lie on the Cytoplasmic side of the membrane. 2 consecutive HAMP domains span residues 216-269 (MTTR…HLEQ) and 297-349 (QEAS…ETMK). Positions 354-583 (STDGLSTGAD…QSTAATHSLK (230 aa)) constitute a Methyl-accepting transducer domain. Gln-378 carries the post-translational modification Glutamate methyl ester (Gln). Glutamate methyl ester (Glu) occurs at positions 385 and 392. Gln-574 is subject to Glutamate methyl ester (Gln). The tract at residues 634–657 (ARPGRSSGSAALAQAPASDGWEEF) is disordered.

It belongs to the methyl-accepting chemotaxis (MCP) protein family.

Its subcellular location is the cell membrane. Its function is as follows. Chemotactic-signal transducers respond to changes in the concentration of attractants and repellents in the environment, transduce a signal from the outside to the inside of the cell, and facilitate sensory adaptation through the variation of the level of methylation. Attractants increase the level of methylation while repellents decrease the level of methylation. The polypeptide is Chemoreceptor McpA (mcpA) (Caulobacter vibrioides (strain ATCC 19089 / CIP 103742 / CB 15) (Caulobacter crescentus)).